We begin with the raw amino-acid sequence, 118 residues long: UPF0102 protein Franean1_1156 (118 aa).

The protein belongs to the UPF0102 family.

This is UPF0102 protein Franean1_1156 from Parafrankia sp. (strain EAN1pec).